The chain runs to 133 residues: Small ribosomal subunit protein uS8c (133 aa).

This sequence belongs to the universal ribosomal protein uS8 family. Part of the 30S ribosomal subunit.

It localises to the plastid. It is found in the chloroplast. Functionally, one of the primary rRNA binding proteins, it binds directly to 16S rRNA central domain where it helps coordinate assembly of the platform of the 30S subunit. The chain is Small ribosomal subunit protein uS8c (rps8) from Chlorokybus atmophyticus (Soil alga).